Reading from the N-terminus, the 330-residue chain is Pantothenate kinase (330 aa).

ATP is bound at residue 108 to 115 (GSVAVGKS).

Belongs to the prokaryotic pantothenate kinase family.

The protein localises to the cytoplasm. It catalyses the reaction (R)-pantothenate + ATP = (R)-4'-phosphopantothenate + ADP + H(+). It participates in cofactor biosynthesis; coenzyme A biosynthesis; CoA from (R)-pantothenate: step 1/5. The chain is Pantothenate kinase from Allorhizobium ampelinum (strain ATCC BAA-846 / DSM 112012 / S4) (Agrobacterium vitis (strain S4)).